The primary structure comprises 32 residues: TCSIPYEYSNGKLKRTLYYSNGVYANSFTENN.

Expressed by the venom gland.

The protein localises to the secreted. The chain is Hainantoxin F8-35.23 from Cyriopagopus hainanus (Chinese bird spider).